The primary structure comprises 127 residues: Glycine cleavage system H protein (127 aa).

Residues 22-104 (EVVIGITHFA…YEGAWMVKVE (83 aa)) form the Lipoyl-binding domain. Residue Lys-63 is modified to N6-lipoyllysine.

It belongs to the GcvH family. In terms of assembly, the glycine cleavage system is composed of four proteins: P, T, L and H. The cofactor is (R)-lipoate.

In terms of biological role, the glycine cleavage system catalyzes the degradation of glycine. The H protein shuttles the methylamine group of glycine from the P protein to the T protein. Is also involved in protein lipoylation via its role as an octanoyl/lipoyl carrier protein intermediate. The polypeptide is Glycine cleavage system H protein (Bacillus cereus (strain ATCC 10987 / NRS 248)).